A 99-amino-acid polypeptide reads, in one-letter code: MVLAMLGALHPRAGLSLFALYLVLAAALLRPQPLRPQRAVPEEFSAPLELSAPLSGLVDDYGVRPKHPWPRGPRPLLSRAQQRKRDGPDMAEYYYDSRL.

A helical membrane pass occupies residues 13 to 29; sequence AGLSLFALYLVLAAALL. The tract at residues 64-90 is disordered; the sequence is RPKHPWPRGPRPLLSRAQQRKRDGPDM.

As to quaternary structure, interacts with SPPL2C (via active sites); the interaction stabilizes FREY1 protein and inhibits SPPL2C proteolytic activity. Interacts with IZUMO1; the interaction retains IZUMO1 at the endoplasmic reticulum membrane and coordinates IZUMO1 complex assembly.

Its subcellular location is the endoplasmic reticulum membrane. In terms of biological role, key regulator for male fertility expressed transiently in round spermatids where it recruits IZUMO1 at the endoplasmic reticulum (ER) membrane and coordinates the oolemmal binding multimeric complex (IZUMO1 complex) assembly. Upon complete assembly of the IZUMO1 complex, its ER retention is released, facilitating IZUMO1 complex export to the acrosome. Through the interaction with SPPL2C, inhibits its intramembrane protease activity directly accessing the catalytic center of an I-CLiP. The protein is Protein Frey (FREY1) of Bos taurus (Bovine).